The following is a 238-amino-acid chain: LexA repressor (238 aa).

Positions 26–46 (FDEMKDALELRSKSGIHRLIS) form a DNA-binding region, H-T-H motif. Residues S159 and K197 each act as for autocatalytic cleavage activity in the active site.

The protein belongs to the peptidase S24 family. In terms of assembly, homodimer.

The catalysed reaction is Hydrolysis of Ala-|-Gly bond in repressor LexA.. Its function is as follows. Represses a number of genes involved in the response to DNA damage (SOS response), including recA and lexA. In the presence of single-stranded DNA, RecA interacts with LexA causing an autocatalytic cleavage which disrupts the DNA-binding part of LexA, leading to derepression of the SOS regulon and eventually DNA repair. This is LexA repressor from Gluconobacter oxydans (strain 621H) (Gluconobacter suboxydans).